We begin with the raw amino-acid sequence, 213 residues long: Na(+)-translocating NADH-quinone reductase subunit E (213 aa).

The next 6 helical transmembrane spans lie at 12–32 (AVFVENLALAFFLGMCTFLAV), 40–60 (IGLGIAVIAIETITVPANQLI), 92–112 (FLGFISYIGVIAAMVQILEMF), 124–144 (LGIFLPLITVNCAILGASLFM), 155–175 (VVFGFGCGVGWALAIMALAGI), and 191–211 (LGITFITVGLMSLAFMSFSGI).

It belongs to the NqrDE/RnfAE family. In terms of assembly, composed of six subunits; NqrA, NqrB, NqrC, NqrD, NqrE and NqrF.

It localises to the cell inner membrane. It catalyses the reaction a ubiquinone + n Na(+)(in) + NADH + H(+) = a ubiquinol + n Na(+)(out) + NAD(+). Functionally, NQR complex catalyzes the reduction of ubiquinone-1 to ubiquinol by two successive reactions, coupled with the transport of Na(+) ions from the cytoplasm to the periplasm. NqrA to NqrE are probably involved in the second step, the conversion of ubisemiquinone to ubiquinol. The polypeptide is Na(+)-translocating NADH-quinone reductase subunit E (Rhodopirellula baltica (strain DSM 10527 / NCIMB 13988 / SH1)).